Consider the following 113-residue polypeptide: Large ribosomal subunit protein bL19 (113 aa).

This sequence belongs to the bacterial ribosomal protein bL19 family.

Functionally, this protein is located at the 30S-50S ribosomal subunit interface and may play a role in the structure and function of the aminoacyl-tRNA binding site. This is Large ribosomal subunit protein bL19 from Mycobacterium marinum (strain ATCC BAA-535 / M).